The following is a 299-amino-acid chain: Probable alpha-L-glutamate ligase 2 (299 aa).

Positions 104–287 constitute an ATP-grasp domain; that stretch reads MQLMSRRGIG…VAGAIIEFVE (184 aa). ATP is bound by residues Lys141, 178-179, Asp187, and 211-213; these read EY and RSN. Residues Asp248, Glu260, and Asn262 each coordinate Mg(2+). Mn(2+) is bound by residues Asp248, Glu260, and Asn262.

Belongs to the RimK family. Requires Mg(2+) as cofactor. It depends on Mn(2+) as a cofactor.

The sequence is that of Probable alpha-L-glutamate ligase 2 from Shewanella sp. (strain MR-4).